Consider the following 268-residue polypeptide: 1D-myo-inositol 2-acetamido-2-deoxy-alpha-D-glucopyranoside deacetylase (268 aa).

Zn(2+) is bound by residues H7, D10, and H142.

The protein belongs to the MshB deacetylase family. Zn(2+) serves as cofactor.

The catalysed reaction is 1D-myo-inositol 2-acetamido-2-deoxy-alpha-D-glucopyranoside + H2O = 1D-myo-inositol 2-amino-2-deoxy-alpha-D-glucopyranoside + acetate. Catalyzes the deacetylation of 1D-myo-inositol 2-acetamido-2-deoxy-alpha-D-glucopyranoside (GlcNAc-Ins) in the mycothiol biosynthesis pathway. The protein is 1D-myo-inositol 2-acetamido-2-deoxy-alpha-D-glucopyranoside deacetylase of Saccharomonospora viridis (strain ATCC 15386 / DSM 43017 / JCM 3036 / CCUG 5913 / NBRC 12207 / NCIMB 9602 / P101) (Thermoactinomyces viridis).